The chain runs to 521 residues: MSFSRSEAAPAAPLPDLAATLAALRDDAFQQLGAAFVTRLPAAPLPAPYVVGFSDDAARMLGLEPALRDAPGFAELFCGNPTRDWPQASLPYASVYSGHQFGVWAGQLGDGRALTIGELAHDGRRYELQLKGAGRTPYSRMGDGRAVLRSSIREFLCSEAMHHLGIPTTRALAVIGSDQPVVREEIETSAVVTRVAQSFVRFGHFEHFFANDRPEQLRALADHVIERFYPACRDADDPYLALLAEATRRTAELVAQWQAVGFCHGVMNTDNMSILGLTIDYGPFGFIDAFDAKHVCNHSDTQGRYAYRMQPRIAHWNCFCLAQALLPLIGLHRDAPSEDARAERAVEDAHAVLGRFPEQFGPALERAIRAKLGLALEREGDAALANQLLEIMDASHADFTLTFRHLARVSKHDARGDAPVRDLFIDRDAFDRWANLYRARLSEEARDDASRAAAMNRVNPKYVLRNHLAETAIRRAKEKDFSEVERLAAVLRRPFDEQPEHDAYAALPPDWASTLEVSCSS.

ATP contacts are provided by G109, G111, R112, K131, D143, G144, R194, and R201. The active-site Proton acceptor is the D270. Mg(2+)-binding residues include N271 and D280. D280 lines the ATP pocket.

Belongs to the SELO family. Requires Mg(2+) as cofactor. The cofactor is Mn(2+).

The catalysed reaction is L-seryl-[protein] + ATP = 3-O-(5'-adenylyl)-L-seryl-[protein] + diphosphate. It carries out the reaction L-threonyl-[protein] + ATP = 3-O-(5'-adenylyl)-L-threonyl-[protein] + diphosphate. The enzyme catalyses L-tyrosyl-[protein] + ATP = O-(5'-adenylyl)-L-tyrosyl-[protein] + diphosphate. It catalyses the reaction L-histidyl-[protein] + UTP = N(tele)-(5'-uridylyl)-L-histidyl-[protein] + diphosphate. The catalysed reaction is L-seryl-[protein] + UTP = O-(5'-uridylyl)-L-seryl-[protein] + diphosphate. It carries out the reaction L-tyrosyl-[protein] + UTP = O-(5'-uridylyl)-L-tyrosyl-[protein] + diphosphate. Its function is as follows. Nucleotidyltransferase involved in the post-translational modification of proteins. It can catalyze the addition of adenosine monophosphate (AMP) or uridine monophosphate (UMP) to a protein, resulting in modifications known as AMPylation and UMPylation. In Burkholderia mallei (strain ATCC 23344), this protein is Protein nucleotidyltransferase YdiU.